Consider the following 89-residue polypeptide: UPF0335 protein RPE_4107 (89 aa).

Belongs to the UPF0335 family.

This chain is UPF0335 protein RPE_4107, found in Rhodopseudomonas palustris (strain BisA53).